Reading from the N-terminus, the 177-residue chain is Dynein light chain Tctex-type 5-A (177 aa).

This sequence belongs to the dynein light chain Tctex-type family.

This is Dynein light chain Tctex-type 5-A (Dynlt5-a) from Xenopus laevis (African clawed frog).